The sequence spans 1307 residues: MFNTYTNSLQWPIRSRNQQDYCSLLPERSESYKLSKAYTSSRCYCVSSRSSCCCCCSTPSSSSFVKPKVLINPGFVLYGVRQSTLIQWPSFQRRLLVGGGRLMGCEVYSSCDGIRRKNRSFKLRCLEESDECCGGRSCSDDVEAMISFLSEELIDEERKWNLVSRVKEKKKVGNVRKVSVEGSNSYGNGRVSQRVKKPEGFGRRKEIKEDVKLNERYDCEHCGRRKKSSELESESRRGSKLVTGEYIGKSYRGDEEREVRPRRRKSSSCSSYYSLASSGEFESDTEDQEEDVEIYRENVRSSEKKVVDQSAKRLKSRKEASQMHSRKKRDESSTGVDSRYQKQIFEEGENSNQAVTLNQRRRKKFSQTENRVSESTGNYEEDMEIHEVHVNDAETSSQNQKLFNEREDYRVHSIRNDSGNENIESSQHQLKERLETRYSSEDRVSEMRRRTKYSSSQEEGINVLQNFPEVTNNQQPLVEERISKQAGTRRTTEHISESSEIHDIDIRNTYVSQREDQIRNQEVHAGLVSGLQSERKQQDYHIEHNPLQTTQSDRTSVSVSHTSDAVRYTEIQRKSEKRLIGQGSTTAVQSDSKVEKNGAQKEDSRLDHANSKKDGQTTLGLQSYQSKLSEEASSSQSSLMASRTKLQLVDLVSEEMQGSETTLIPPSSQLVSRRSGQSYRTGGVSIQEISHGTSESGYTTAFEHPRAGASVNSQSAGELMGFTSHEDAMGSAHRLEQASEKYVGEFVKKAKHGVINPETEEQRAESNQLKRRDSRRSSGGSGAKGPSDEMWVTDSAQGTPHPGATEGNAAVGNAIFKRNGRSLWNVIADIARLRWGSRAGSPDSSAKPAGRSSPNESVSSATWFSGREHDGSSDDNTKGDKVLPQEAPSLHQVEVGQTSPRSQSEYPGTTKLKQRSERHEGVVSSPSSTILEGGSVSNRMSSTSGNQIVGVDEEEGGNFEFRLPETALTEVPMKLPSRNLIRSPPIKESSESSLTEASSDQNFTVGEGRRYPRMDAGQNPLLFPGRNLRSPAVMEPPVPRPRMVSGSSSLREQVEQQQPLSAKSQEETGSVSADSALIQRKLQRNKQVVRDSFEEWEEAYKVEAERRTVDEIFMREALVEAKKAADTWEVPVGAVLVHDGKIIARGYNLVEELRDSTAHAEMICIREGSKALRSWRLADTTLYVTLEPCPMCAGAILQARVNTLVWGAPNKLLGADGSWIRLFPGGEGNGSEASEKPPPPVHPFHPKMTIRRGVLESECAQTMQQFFQLRRKKKDKNSDPPTPTDHHHHHLPKLLNKMHQVLPFFCL.

The transit peptide at 1–55 (MFNTYTNSLQWPIRSRNQQDYCSLLPERSESYKLSKAYTSSRCYCVSSRSSCCCC) directs the protein to the chloroplast. 7 disordered regions span residues 245–377 (EYIG…ESTG), 439–458 (SSEDRVSEMRRRTKYSSSQE), 544–563 (HNPLQTTQSDRTSVSVSHTS), 576–618 (EKRL…GQTT), 753–807 (GVIN…ATEG), 837–957 (SRAG…EEGG), and 975–1073 (LPSR…SVSA). Low complexity predominate over residues 267 to 278 (SSCSSYYSLASS). A coiled-coil region spans residues 280–309 (EFESDTEDQEEDVEIYRENVRSSEKKVVDQ). Acidic residues predominate over residues 281 to 292 (FESDTEDQEEDV). The span at 293-321 (EIYRENVRSSEKKVVDQSAKRLKSRKEAS) shows a compositional bias: basic and acidic residues. Positions 367-377 (QTENRVSESTG) are enriched in polar residues. A compositionally biased stretch (basic and acidic residues) spans 439–448 (SSEDRVSEMR). Polar residues-rich tracts occupy residues 546–563 (PLQTTQSDRTSVSVSHTS) and 582–591 (QGSTTAVQSD). Basic and acidic residues-rich tracts occupy residues 592 to 615 (SKVEKNGAQKEDSRLDHANSKKDG) and 760 to 771 (EEQRAESNQLKR). The segment covering 852–863 (SSPNESVSSATW) has biased composition (polar residues). Residues 866–883 (GREHDGSSDDNTKGDKVL) show a composition bias toward basic and acidic residues. Polar residues-rich tracts occupy residues 895–907 (VGQTSPRSQSEYP), 924–947 (SSPSSTILEGGSVSNRMSSTSGNQ), and 1045–1073 (SGSSSLREQVEQQQPLSAKSQEETGSVSA). The region spanning 1108–1230 (TVDEIFMREA…RLFPGGEGNG (123 aa)) is the CMP/dCMP-type deaminase domain. Position 1159 (H1159) interacts with Zn(2+). E1161 acts as the Proton donor in catalysis. Zn(2+) is bound by residues C1189 and C1192. The tract at residues 1268 to 1293 (QLRRKKKDKNSDPPTPTDHHHHHLPK) is disordered.

It belongs to the cytidine and deoxycytidylate deaminase family. As to quaternary structure, homodimer. It depends on Zn(2+) as a cofactor.

The protein resides in the plastid. Its subcellular location is the chloroplast. The enzyme catalyses adenosine(34) in tRNA + H2O + H(+) = inosine(34) in tRNA + NH4(+). Its function is as follows. Deaminates adenosines to inosines in tRNA-Arg(ACG). Exclusively involved in A-to-I editing of the prokaryote-type chloroplast-tRNA and not involved in C-to-U editing. This chain is tRNA(adenine(34)) deaminase, chloroplastic (TADA), found in Arabidopsis thaliana (Mouse-ear cress).